Here is a 305-residue protein sequence, read N- to C-terminus: tRNA pseudouridine synthase B (305 aa).

Aspartate 41 acts as the Nucleophile in catalysis.

This sequence belongs to the pseudouridine synthase TruB family. Type 1 subfamily.

It catalyses the reaction uridine(55) in tRNA = pseudouridine(55) in tRNA. Responsible for synthesis of pseudouridine from uracil-55 in the psi GC loop of transfer RNAs. In Prochlorococcus marinus subsp. pastoris (strain CCMP1986 / NIES-2087 / MED4), this protein is tRNA pseudouridine synthase B.